The primary structure comprises 285 residues: UPF0354 protein SH1179 (285 aa).

The protein belongs to the UPF0354 family.

This Staphylococcus haemolyticus (strain JCSC1435) protein is UPF0354 protein SH1179.